The sequence spans 2701 residues: Centromere-associated protein E (2701 aa).

The Kinesin motor domain occupies 6–329 (AVAVCVRVRP…LQFASTAKYM (324 aa)). An ATP-binding site is contributed by 86-93 (GQTASGKT). Positions 336-2590 (NEVSTDEALL…SNEVKTWKER (2255 aa)) form a coiled coil. Phosphoserine is present on residues S611 and S2083. The segment at 2126 to 2476 (KEIEFQKELS…IDLEKMKNAK (351 aa)) is kinetochore-binding domain. The interval 2355-2376 (SGAQVNPTTQDNKNPHVTSRAT) is disordered. S2389 bears the Phosphoserine mark. Polar residues predominate over residues 2508-2527 (QAQDTSVISEHTDPQPSNKP). 2 disordered regions span residues 2508–2533 (QAQDTSVISEHTDPQPSNKPLTCGGG) and 2588–2701 (KERT…CKTQ). The tract at residues 2510–2698 (QDTSVISEHT…ASSGKDVPEC (189 aa)) is globular autoinhibitory domain. Basic and acidic residues predominate over residues 2588-2600 (KERTLKREAHKQV). The span at 2601–2625 (TCENSPKSPKVTGTASKKKQITPSQ) shows a compositional bias: polar residues. Over residues 2626–2640 (CKERNLQDPVPKESP) the composition is skewed to basic and acidic residues. S2639, S2647, and S2651 each carry phosphoserine. The residue at position 2698 (C2698) is a Cysteine methyl ester. C2698 carries S-farnesyl cysteine lipidation. Positions 2699-2701 (KTQ) are cleaved as a propeptide — removed in mature form.

The protein belongs to the TRAFAC class myosin-kinesin ATPase superfamily. Kinesin family. Monomer. Interacts with CENPF. Interacts with BUB1B. Interacts with SEPT7. Interacts with KIF18A. Interacts with PRC1. Interacts with NUF2; this interaction determines kinetochore localization. Interacts with SKAP; this interaction greatly favors SKAP binding to microtubules. Interacts with TRAPPC12. Interacts with CTCF. In terms of processing, the C-terminal inhibitory domain is phosphorylated. Phosphorylation relieves autoinhibition of the kinetochore motor. Sumoylated with SUMO2 and SUMO3. The sumoylation mediates the association to the kinetochore.

The protein localises to the chromosome. Its subcellular location is the centromere. The protein resides in the kinetochore. It localises to the cytoplasm. It is found in the cytoskeleton. The protein localises to the spindle. Microtubule plus-end-directed kinetochore motor which plays an important role in chromosome congression, microtubule-kinetochore conjugation and spindle assembly checkpoint activation. Drives chromosome congression (alignment of chromosomes at the spindle equator resulting in the formation of the metaphase plate) by mediating the lateral sliding of polar chromosomes along spindle microtubules towards the spindle equator and by aiding the establishment and maintenance of connections between kinetochores and spindle microtubules. The transport of pole-proximal chromosomes towards the spindle equator is favored by microtubule tracks that are detyrosinated. Acts as a processive bi-directional tracker of dynamic microtubule tips; after chromosomes have congressed, continues to play an active role at kinetochores, enhancing their links with dynamic microtubule ends. Suppresses chromosome congression in NDC80-depleted cells and contributes positively to congression only when microtubules are stabilized. Plays an important role in the formation of stable attachments between kinetochores and spindle microtubules The stabilization of kinetochore-microtubule attachment also requires CENPE-dependent localization of other proteins to the kinetochore including BUB1B, MAD1 and MAD2. Plays a role in spindle assembly checkpoint activation (SAC) via its interaction with BUB1B resulting in the activation of its kinase activity, which is important for activating SAC. Necessary for the mitotic checkpoint signal at individual kinetochores to prevent aneuploidy due to single chromosome loss. This is Centromere-associated protein E (CENPE) from Homo sapiens (Human).